Consider the following 153-residue polypeptide: NAD(P)H-quinone oxidoreductase subunit N (153 aa).

Belongs to the complex I NdhN subunit family. In terms of assembly, NDH-1 can be composed of about 15 different subunits; different subcomplexes with different compositions have been identified which probably have different functions.

Its subcellular location is the cellular thylakoid membrane. The catalysed reaction is a plastoquinone + NADH + (n+1) H(+)(in) = a plastoquinol + NAD(+) + n H(+)(out). It carries out the reaction a plastoquinone + NADPH + (n+1) H(+)(in) = a plastoquinol + NADP(+) + n H(+)(out). Its function is as follows. NDH-1 shuttles electrons from an unknown electron donor, via FMN and iron-sulfur (Fe-S) centers, to quinones in the respiratory and/or the photosynthetic chain. The immediate electron acceptor for the enzyme in this species is believed to be plastoquinone. Couples the redox reaction to proton translocation, and thus conserves the redox energy in a proton gradient. Cyanobacterial NDH-1 also plays a role in inorganic carbon-concentration. The polypeptide is NAD(P)H-quinone oxidoreductase subunit N (Prochlorococcus marinus (strain MIT 9313)).